A 420-amino-acid polypeptide reads, in one-letter code: Dynein axonemal assembly factor 4 (420 aa).

A CS domain is found at 3–87 (VRVSEFSWQQ…KEPVLWDSLS (85 aa)). A mediates interaction with ESR1 and STUB1 region spans residues 7–103 (EFSWQQTPAT…EMMQRIREKS (97 aa)). Over residues 164 to 192 (ECQKKADGQKRVQRKEKPLEGKQAEETKA) the composition is skewed to basic and acidic residues. The tract at residues 164–212 (ECQKKADGQKRVQRKEKPLEGKQAEETKALKPRGLPRKAPPTRLPTRGR) is disordered. TPR repeat units lie at residues 288–321 (PDWL…NCKI), 322–355 (PLLY…LTPP), and 364–397 (MKAH…DPAN).

As to quaternary structure, interacts with ZMYND10. Interacts with ESR1 and ESR2. Interacts with STUB1. Interacts with DNAAF2. Interacts with CCT3, CCT4, CCT5 and CCT8. Interacts with DNAAF6/PIH1D3.

The protein localises to the nucleus. The protein resides in the cytoplasm. Its subcellular location is the dynein axonemal particle. It is found in the cell projection. It localises to the neuron projection. Functionally, involved in neuronal migration during development of the cerebral neocortex. May regulate the stability and proteasomal degradation of the estrogen receptors that play an important role in neuronal differentiation, survival and plasticity. Axonemal dynein assembly factor required for ciliary motility. This chain is Dynein axonemal assembly factor 4, found in Mus musculus (Mouse).